The primary structure comprises 144 residues: Bacilliredoxin BrxA (144 aa).

Catalysis depends on nucleophile residues Cys53 and Cys55. An S-bacillithiol cysteine disulfide modification is found at Cys53. A CXC active site motif motif is present at residues 53 to 55 (CGC). Cys53 and Cys55 are oxidised to a cystine.

Belongs to the bacilliredoxin family. Post-translationally, N-terminal Cys of the CXC active site motif can react with bacillithiol (BSH) to form mixed disulfides. S-bacillithiolation protects Cys residues against overoxidation by acting as a redox switch in response to oxidative stress.

Functionally, S-bacillithiolation is the formation of mixed disulfide bonds between protein thiols and the general thiol reductant bacillithiol (BSH) under oxidative stress. BSH is an equivalent of glutathione (GSH) in Firmicutes. This protein is a dithiol bacilliredoxin, which debacillithiolates (removes BSH) the S-bacillithiolated OhrR (OhrR-SSB) in vitro and in vivo NaOCl-generated S-bacillithiolated MetE (MetE-SSB). Involved in maintaining redox homeostasis in response to disulfide stress conditions. Has a redox potential of -130 mV. Displays weak protein disulfide isomerase activity in vitro. This Bacillus subtilis (strain 168) protein is Bacilliredoxin BrxA.